Reading from the N-terminus, the 479-residue chain is Poly(A) polymerase catalytic subunit (479 aa).

Residues Asp202 and Asp204 contribute to the active site. Ca(2+) contacts are provided by Asp202, Asp204, and Asp253.

Belongs to the poxviridae poly(A) polymerase catalytic subunit family. Heterodimer of a large (catalytic) subunit and a small (regulatory) subunit.

The catalysed reaction is RNA(n) + ATP = RNA(n)-3'-adenine ribonucleotide + diphosphate. In terms of biological role, polymerase that creates the 3'-poly(A) tail of mRNA's. The sequence is that of Poly(A) polymerase catalytic subunit (OPG063) from Camelus.